The sequence spans 101 residues: Acylphosphatase (101 aa).

The Acylphosphatase-like domain occupies 12–98; that stretch reads RAHVFVTGRV…EGLRGFEVKR (87 aa). Residues arginine 27 and asparagine 45 contribute to the active site.

The protein belongs to the acylphosphatase family.

The enzyme catalyses an acyl phosphate + H2O = a carboxylate + phosphate + H(+). This is Acylphosphatase (acyP) from Nostoc sp. (strain PCC 7120 / SAG 25.82 / UTEX 2576).